Consider the following 158-residue polypeptide: Ribosome maturation factor RimP (158 aa).

The protein belongs to the RimP family.

It localises to the cytoplasm. In terms of biological role, required for maturation of 30S ribosomal subunits. The protein is Ribosome maturation factor RimP of Leuconostoc mesenteroides subsp. mesenteroides (strain ATCC 8293 / DSM 20343 / BCRC 11652 / CCM 1803 / JCM 6124 / NCDO 523 / NBRC 100496 / NCIMB 8023 / NCTC 12954 / NRRL B-1118 / 37Y).